A 775-amino-acid chain; its full sequence is Homoaconitase, mitochondrial (775 aa).

A mitochondrion-targeting transit peptide spans 1-29 (MQSRLMPSGGPGRRWAFLRVPSTPQRRAF). Residues Cys392, Cys461, and Cys464 each contribute to the [4Fe-4S] cluster site.

Belongs to the aconitase/IPM isomerase family. It depends on [4Fe-4S] cluster as a cofactor.

It localises to the mitochondrion. It carries out the reaction (2R,3S)-homoisocitrate = cis-homoaconitate + H2O. The protein operates within amino-acid biosynthesis; L-lysine biosynthesis via AAA pathway; L-alpha-aminoadipate from 2-oxoglutarate: step 3/5. Catalyzes the reversible hydration of cis-homoaconitate to (2R,3S)-homoisocitrate, a step in the alpha-aminoadipate pathway for lysine biosynthesis. This is Homoaconitase, mitochondrial (lys4) from Aspergillus oryzae (strain ATCC 42149 / RIB 40) (Yellow koji mold).